The following is a 100-amino-acid chain: Small ribosomal subunit protein uS14c (100 aa).

Belongs to the universal ribosomal protein uS14 family. As to quaternary structure, part of the 30S ribosomal subunit.

It localises to the plastid. Its subcellular location is the chloroplast. Functionally, binds 16S rRNA, required for the assembly of 30S particles. This chain is Small ribosomal subunit protein uS14c, found in Thalassiosira pseudonana (Marine diatom).